A 190-amino-acid chain; its full sequence is Holliday junction branch migration complex subunit RuvA (190 aa).

The interval 1–64 (MIGKLSGTLD…EDAQILYGFA (64 aa)) is domain I. Residues 65–137 (TSQERAAFRE…LKGKLGPDIG (73 aa)) are domain II. Residues 137–141 (GVAAS) are flexible linker. The domain III stretch occupies residues 142-190 (VANDSQADILQALLALGYSDKEAAAALKALPSDVGVSEGIRLALRALGK).

The protein belongs to the RuvA family. Homotetramer. Forms an RuvA(8)-RuvB(12)-Holliday junction (HJ) complex. HJ DNA is sandwiched between 2 RuvA tetramers; dsDNA enters through RuvA and exits via RuvB. An RuvB hexamer assembles on each DNA strand where it exits the tetramer. Each RuvB hexamer is contacted by two RuvA subunits (via domain III) on 2 adjacent RuvB subunits; this complex drives branch migration. In the full resolvosome a probable DNA-RuvA(4)-RuvB(12)-RuvC(2) complex forms which resolves the HJ.

The protein localises to the cytoplasm. The RuvA-RuvB-RuvC complex processes Holliday junction (HJ) DNA during genetic recombination and DNA repair, while the RuvA-RuvB complex plays an important role in the rescue of blocked DNA replication forks via replication fork reversal (RFR). RuvA specifically binds to HJ cruciform DNA, conferring on it an open structure. The RuvB hexamer acts as an ATP-dependent pump, pulling dsDNA into and through the RuvAB complex. HJ branch migration allows RuvC to scan DNA until it finds its consensus sequence, where it cleaves and resolves the cruciform DNA. In Albidiferax ferrireducens (strain ATCC BAA-621 / DSM 15236 / T118) (Rhodoferax ferrireducens), this protein is Holliday junction branch migration complex subunit RuvA.